The sequence spans 188 residues: dTTP/UTP pyrophosphatase (188 aa).

The Proton acceptor role is filled by Asp-67.

Belongs to the Maf family. YhdE subfamily. It depends on a divalent metal cation as a cofactor.

The protein resides in the cytoplasm. It catalyses the reaction dTTP + H2O = dTMP + diphosphate + H(+). The enzyme catalyses UTP + H2O = UMP + diphosphate + H(+). Nucleoside triphosphate pyrophosphatase that hydrolyzes dTTP and UTP. May have a dual role in cell division arrest and in preventing the incorporation of modified nucleotides into cellular nucleic acids. In Roseobacter denitrificans (strain ATCC 33942 / OCh 114) (Erythrobacter sp. (strain OCh 114)), this protein is dTTP/UTP pyrophosphatase.